Consider the following 77-residue polypeptide: Translation initiation factor IF-1, chloroplastic (77 aa).

The 71-residue stretch at 1 to 71 (MKEQKWTHEG…TRGRIIYRLR (71 aa)) folds into the S1-like domain.

It belongs to the IF-1 family. In terms of assembly, component of the 30S ribosomal translation pre-initiation complex which assembles on the 30S ribosome in the order IF-2 and IF-3, IF-1 and N-formylmethionyl-tRNA(fMet); mRNA recruitment can occur at any time during PIC assembly.

It is found in the plastid. It localises to the chloroplast. One of the essential components for the initiation of protein synthesis. Stabilizes the binding of IF-2 and IF-3 on the 30S subunit to which N-formylmethionyl-tRNA(fMet) subsequently binds. Helps modulate mRNA selection, yielding the 30S pre-initiation complex (PIC). Upon addition of the 50S ribosomal subunit IF-1, IF-2 and IF-3 are released leaving the mature 70S translation initiation complex. The polypeptide is Translation initiation factor IF-1, chloroplastic (Coffea arabica (Arabian coffee)).